Consider the following 341-residue polypeptide: L-threonine 3-dehydrogenase (341 aa).

Cys38 serves as a coordination point for Zn(2+). Catalysis depends on charge relay system residues Thr40 and His43. Residues His63, Glu64, Cys93, Cys96, Cys99, and Cys107 each coordinate Zn(2+). NAD(+) contacts are provided by residues Ile175, Asp195, Arg200, 262-264 (LGI), and 286-287 (IY).

Belongs to the zinc-containing alcohol dehydrogenase family. As to quaternary structure, homotetramer. The cofactor is Zn(2+).

The protein resides in the cytoplasm. The enzyme catalyses L-threonine + NAD(+) = (2S)-2-amino-3-oxobutanoate + NADH + H(+). Its pathway is amino-acid degradation; L-threonine degradation via oxydo-reductase pathway; glycine from L-threonine: step 1/2. Catalyzes the NAD(+)-dependent oxidation of L-threonine to 2-amino-3-ketobutyrate. This Yersinia pseudotuberculosis serotype O:1b (strain IP 31758) protein is L-threonine 3-dehydrogenase.